We begin with the raw amino-acid sequence, 294 residues long: 4-hydroxy-tetrahydrodipicolinate synthase (294 aa).

Residue T44 coordinates pyruvate. The active-site Proton donor/acceptor is Y132. Residue K161 is the Schiff-base intermediate with substrate of the active site. I206 contributes to the pyruvate binding site.

It belongs to the DapA family. Homotetramer; dimer of dimers.

The protein localises to the cytoplasm. It catalyses the reaction L-aspartate 4-semialdehyde + pyruvate = (2S,4S)-4-hydroxy-2,3,4,5-tetrahydrodipicolinate + H2O + H(+). It participates in amino-acid biosynthesis; L-lysine biosynthesis via DAP pathway; (S)-tetrahydrodipicolinate from L-aspartate: step 3/4. In terms of biological role, catalyzes the condensation of (S)-aspartate-beta-semialdehyde [(S)-ASA] and pyruvate to 4-hydroxy-tetrahydrodipicolinate (HTPA). The chain is 4-hydroxy-tetrahydrodipicolinate synthase from Thermotoga sp. (strain RQ2).